The following is a 698-amino-acid chain: SHC SH2 domain-binding protein 1 homolog B (698 aa).

PbH1 repeat units follow at residues 480-502 (CAELLMKYSDLYGAKGAGMEIYP), 503-524 (GSKCTLIGNGIHHCRDGILIKD), and 532-554 (IPKIIMENNVIHNNEGYAVVLVK).

The protein resides in the midbody. It is found in the cytoplasm. The protein localises to the cytoskeleton. It localises to the spindle. May play a role in signaling pathways governing cellular proliferation. The polypeptide is SHC SH2 domain-binding protein 1 homolog B (shcbp1-b) (Xenopus laevis (African clawed frog)).